Reading from the N-terminus, the 309-residue chain is NAD kinase (309 aa).

The Proton acceptor role is filled by Asp-89. Residues 89–90 (DG), 163–164 (NE), His-174, Arg-191, Asp-193, and 204–209 (TAYALS) contribute to the NAD(+) site.

It belongs to the NAD kinase family. A divalent metal cation serves as cofactor.

The protein localises to the cytoplasm. The catalysed reaction is NAD(+) + ATP = ADP + NADP(+) + H(+). Involved in the regulation of the intracellular balance of NAD and NADP, and is a key enzyme in the biosynthesis of NADP. Catalyzes specifically the phosphorylation on 2'-hydroxyl of the adenosine moiety of NAD to yield NADP. The polypeptide is NAD kinase (Shewanella sp. (strain MR-4)).